The following is a 429-amino-acid chain: MSLKLEVKTEIKLDYQGFQNQINEFHKRINDKNSPDINFLGWNNFPEVAINPQEIARMRKIVENLHQNSINVLVVIGIGGSYLGAKAALDFILGLGPFENKPEVIFLGNSLSSTDLYQKIEYLKTKNFAINVISKSGSTIEPAITFQILYQFLIDQIGEKLAKTRTFVTTSIKSGELLEIAKSNELEIFEVIESIGGRFSVLSSVGFFPLLFAKINVDEIIQGAIEAHKKYSTSSISQNLAYKYALFRFLMYKNFNYKTEILISYEPFLIYFNEWWKQLFGESEGKNLKGLFPASAIFTTDLHSLGQFIQDGSKNFFQTIIYIKKPKFDLGIKKLVQFNSKINKLSGKTVSEINFQAFLATTLAHSSYGNNPNLVLEIADSSPKTFGHLVMFFEKACAMSAYLLGVNPFDQPGVESYKNELAKNLGWDR.

Glu-282 functions as the Proton donor in the catalytic mechanism. Catalysis depends on residues His-303 and Lys-418.

It belongs to the GPI family.

It localises to the cytoplasm. The enzyme catalyses alpha-D-glucose 6-phosphate = beta-D-fructose 6-phosphate. The protein operates within carbohydrate biosynthesis; gluconeogenesis. It participates in carbohydrate degradation; glycolysis; D-glyceraldehyde 3-phosphate and glycerone phosphate from D-glucose: step 2/4. Functionally, catalyzes the reversible isomerization of glucose-6-phosphate to fructose-6-phosphate. This chain is Glucose-6-phosphate isomerase, found in Mesomycoplasma hyopneumoniae (strain 7448) (Mycoplasma hyopneumoniae).